The primary structure comprises 190 residues: Translation machinery-associated protein 22 (190 aa).

Residues 63-83 (LNVSGTKDSNAEEQPAKLTKE) are disordered. The SUI1 domain occupies 99–170 (VLIKTIERTK…DIFDFILEKF (72 aa)).

Belongs to the DENR family. In terms of assembly, interacts with the 40S ribosomal subunit.

The protein localises to the cytoplasm. The chain is Translation machinery-associated protein 22 (tma22) from Schizosaccharomyces pombe (strain 972 / ATCC 24843) (Fission yeast).